The sequence spans 255 residues: NAP1-related protein 2 (255 aa).

A coiled-coil region spans residues I19 to K60. The interval N213–E255 is disordered. Over residues D221 to E255 the composition is skewed to acidic residues.

The protein belongs to the nucleosome assembly protein (NAP) family. As to quaternary structure, can form homomeric and heteromeric protein complexes with NRP1. Binds histones H2A and H2B and associates with chromatin in vivo. In terms of tissue distribution, ubiquitous.

The protein resides in the cytoplasm. Its subcellular location is the nucleus. Acts as a histone H2A/H2B chaperone in nucleosome assembly, playing a critical role for the correct expression of genes involved in root proliferation and patterning. Required with NRP1 for the maintenance of cell proliferation and differentiation in postembryonic root growth. Involved in both intramolecular and intermolecular somatic homologous recombination. This Arabidopsis thaliana (Mouse-ear cress) protein is NAP1-related protein 2 (NRP2).